The following is a 514-amino-acid chain: 2-isopropylmalate synthase (514 aa).

One can recognise a Pyruvate carboxyltransferase domain in the interval 5-268 (LIIFDTTLRD…DVGIDTTQIV (264 aa)). Residues Asp-14, His-202, His-204, and Asn-239 each coordinate Mn(2+). The segment at 395–514 (KFVSLSQHSE…KDDKLNPQRS (120 aa)) is regulatory domain.

It belongs to the alpha-IPM synthase/homocitrate synthase family. LeuA type 1 subfamily. As to quaternary structure, homodimer. Mn(2+) serves as cofactor.

Its subcellular location is the cytoplasm. It carries out the reaction 3-methyl-2-oxobutanoate + acetyl-CoA + H2O = (2S)-2-isopropylmalate + CoA + H(+). It participates in amino-acid biosynthesis; L-leucine biosynthesis; L-leucine from 3-methyl-2-oxobutanoate: step 1/4. In terms of biological role, catalyzes the condensation of the acetyl group of acetyl-CoA with 3-methyl-2-oxobutanoate (2-ketoisovalerate) to form 3-carboxy-3-hydroxy-4-methylpentanoate (2-isopropylmalate). The chain is 2-isopropylmalate synthase from Burkholderia multivorans (strain ATCC 17616 / 249).